Reading from the N-terminus, the 86-residue chain is Large ribosomal subunit protein uL23 (86 aa).

This sequence belongs to the universal ribosomal protein uL23 family. As to quaternary structure, part of the 50S ribosomal subunit. Contacts protein L29.

In terms of biological role, binds to 23S rRNA. One of the proteins that surrounds the polypeptide exit tunnel on the outside of the ribosome. This chain is Large ribosomal subunit protein uL23, found in Methanococcus maripaludis (strain DSM 14266 / JCM 13030 / NBRC 101832 / S2 / LL).